The chain runs to 662 residues: Methyl-accepting chemotaxis protein McpB (662 aa).

Residues 1–16 lie on the Cytoplasmic side of the membrane; the sequence is MKTFINWLKKPSISKK. A helical transmembrane segment spans residues 17–37; that stretch reads LIVSFIAILIIPILILEFSSY. The Extracellular segment spans residues 38–282; it reads RSASGKLDQE…IKDASKSVLT (245 aa). In terms of domain architecture, Cache spans 153 to 229; that stretch reads VTDPYVAASD…KAGEKLSGDW (77 aa). A helical membrane pass occupies residues 283–303; the sequence is TGMIVLIASIVAGGILILFIV. The HAMP domain maps to 304-356; that stretch reads RSITKPLKRLVQSSKTISRGDLTETIEIHSKDELGELGESFNEMGQSLRSLIS. Residues 304 to 662 lie on the Cytoplasmic side of the membrane; it reads RSITKPLKRL…RDLTKQFKIE (359 aa). A glutamate methyl ester (Gln) mark is found at glutamine 371 and glutamine 595. The 237-residue stretch at 375 to 611 folds into the Methyl-accepting transducer domain; the sequence is SAGQTSKATE…HVSAAVSGIA (237 aa). Glutamate methyl ester (Glu) occurs at positions 630 and 637.

It belongs to the methyl-accepting chemotaxis (MCP) protein family. In terms of assembly, interacts with FloT. Post-translationally, some glutamine residues are deamidated to glutamate by CheD and subsequently methylated. The demethylation is selective. Gln-371 is demethylated only upon asparagine addition whereas Glu-637 is demethylated only upon asparagine removal. Glu-630 appears indiscriminate and is demethylated upon both addition and removal of asparagine.

It localises to the cell membrane. The protein resides in the membrane raft. Functionally, chemotactic-signal transducers respond to changes in the concentration of attractants and repellents in the environment, transduce a signal from the outside to the inside of the cell, and facilitate sensory adaptation through the variation of the level of methylation. All amino acids serve as attractants in B.subtilis, they appear to cause an increase in the turnover methyl groups, leading to methylation of an unidentified acceptor, while repellents have been shown to cause a decrease in methyl group turnover. The methyl groups are added by a methyltransferase and removed by a methylesterase. McpB is required for taxis towards asparagine, aspartate, glutamine, and histidine. In Bacillus subtilis (strain 168), this protein is Methyl-accepting chemotaxis protein McpB (mcpB).